Here is a 242-residue protein sequence, read N- to C-terminus: Phosphoribosylaminoimidazole-succinocarboxamide synthase (242 aa).

Belongs to the SAICAR synthetase family.

It carries out the reaction 5-amino-1-(5-phospho-D-ribosyl)imidazole-4-carboxylate + L-aspartate + ATP = (2S)-2-[5-amino-1-(5-phospho-beta-D-ribosyl)imidazole-4-carboxamido]succinate + ADP + phosphate + 2 H(+). It participates in purine metabolism; IMP biosynthesis via de novo pathway; 5-amino-1-(5-phospho-D-ribosyl)imidazole-4-carboxamide from 5-amino-1-(5-phospho-D-ribosyl)imidazole-4-carboxylate: step 1/2. The polypeptide is Phosphoribosylaminoimidazole-succinocarboxamide synthase (Ehrlichia chaffeensis (strain ATCC CRL-10679 / Arkansas)).